We begin with the raw amino-acid sequence, 842 residues long: Xyloglucanase Xgh74A (842 aa).

The N-terminal stretch at M1 to A32 is a signal peptide. D70 (nucleophile) is an active-site residue. BNR repeat units follow at residues R134 to K144, W185 to K196, Y252 to K262, and F358 to K368. Residue D480 is the Proton donor of the active site. BNR repeat units follow at residues F533–W541, V577–K586, Y616–T626, W660–K671, and F708–V718. Residues D771–K841 form the Dockerin domain.

It belongs to the glycosyl hydrolase 74 family.

Hydrolyzes the glucosidic bonds of unbranched Glc residues in tamarind seed xyloglucan, producing XXXG, XLXG, XXLG and XLLG. Has low activity on carboxymethylcellulose, lichenan,hydroxyethylcellulose and glucuronoxylan, and no activity on xylan, polygalaturonic acid, wheat arabinoxylan, rhamnogalacturan, curdlan, laminarin, galactomannan, galactan, arabinan and pachyman or amorphous cellulose. This chain is Xyloglucanase Xgh74A, found in Acetivibrio thermocellus (strain ATCC 27405 / DSM 1237 / JCM 9322 / NBRC 103400 / NCIMB 10682 / NRRL B-4536 / VPI 7372) (Clostridium thermocellum).